We begin with the raw amino-acid sequence, 445 residues long: N-succinylarginine dihydrolase (445 aa).

Substrate-binding positions include 19–28, Asn-110, and 137–138; these read AGLSFGNVAS and HR. Residue Glu-174 is part of the active site. Arg-214 lines the substrate pocket. His-250 is a catalytic residue. Substrate-binding residues include Asp-252 and Asn-363. The active-site Nucleophile is the Cys-369.

Belongs to the succinylarginine dihydrolase family. In terms of assembly, homodimer.

It carries out the reaction N(2)-succinyl-L-arginine + 2 H2O + 2 H(+) = N(2)-succinyl-L-ornithine + 2 NH4(+) + CO2. Its pathway is amino-acid degradation; L-arginine degradation via AST pathway; L-glutamate and succinate from L-arginine: step 2/5. Functionally, catalyzes the hydrolysis of N(2)-succinylarginine into N(2)-succinylornithine, ammonia and CO(2). This is N-succinylarginine dihydrolase from Shewanella piezotolerans (strain WP3 / JCM 13877).